A 135-amino-acid chain; its full sequence is Single-stranded DNA-binding protein RIM1, mitochondrial (135 aa).

The N-terminal 17 residues, 1-17 (MFLRTQARFFHATTKKM), are a transit peptide targeting the mitochondrion. In terms of domain architecture, SSB spans 19 to 117 (FSKMSIVGRI…LVQKDINLLK (99 aa)).

As to quaternary structure, homotetramer. Interacts with PIF1.

It localises to the mitochondrion. Functionally, this protein binds preferentially and cooperatively to single-stranded DNA (ssDNS). Involved in mitochondrial DNA replication. Stimulates PIF1 helicase activity. The sequence is that of Single-stranded DNA-binding protein RIM1, mitochondrial (RIM1) from Saccharomyces cerevisiae (strain ATCC 204508 / S288c) (Baker's yeast).